A 236-amino-acid chain; its full sequence is Uridylate kinase (236 aa).

Residue 10-13 participates in ATP binding; that stretch reads KLSG. Glycine 52 is a binding site for UMP. ATP is bound by residues glycine 53 and arginine 57. UMP is bound by residues aspartate 72 and 133 to 140; that span reads TGNPFFTT. Residues threonine 160, tyrosine 166, and aspartate 169 each contribute to the ATP site.

Belongs to the UMP kinase family. In terms of assembly, homohexamer.

It localises to the cytoplasm. It catalyses the reaction UMP + ATP = UDP + ADP. The protein operates within pyrimidine metabolism; CTP biosynthesis via de novo pathway; UDP from UMP (UMPK route): step 1/1. With respect to regulation, inhibited by UTP. Its function is as follows. Catalyzes the reversible phosphorylation of UMP to UDP. The chain is Uridylate kinase from Cupriavidus pinatubonensis (strain JMP 134 / LMG 1197) (Cupriavidus necator (strain JMP 134)).